Consider the following 379-residue polypeptide: Cytochrome b (379 aa).

Helical transmembrane passes span 33–53, 77–98, 113–133, and 178–198; these read FGSLLGACLTIQIITGLFLAM, WTIRYLHANGASMFFLCLFIHV, WNVGIILLFSVMATAFMGYVL, and FFALHFILPFIISALVMIHLL. Residues His83 and His97 each contribute to the heme b site. The heme b site is built by His182 and His196. An a ubiquinone-binding site is contributed by His201. 4 helical membrane-spanning segments follow: residues 226-246, 288-308, 320-340, and 347-367; these read TKDFLGLLLLILLLMTTALFY, LGGVLALILSILILMIIPFLQ, LSQFLFWILVADLLTLTWIGG, and FINIGQMASMLYFFLMIFIMP.

The protein belongs to the cytochrome b family. In terms of assembly, the cytochrome bc1 complex contains 11 subunits: 3 respiratory subunits (MT-CYB, CYC1 and UQCRFS1), 2 core proteins (UQCRC1 and UQCRC2) and 6 low-molecular weight proteins (UQCRH/QCR6, UQCRB/QCR7, UQCRQ/QCR8, UQCR10/QCR9, UQCR11/QCR10 and a cleavage product of UQCRFS1). This cytochrome bc1 complex then forms a dimer. Heme b serves as cofactor.

It localises to the mitochondrion inner membrane. Component of the ubiquinol-cytochrome c reductase complex (complex III or cytochrome b-c1 complex) that is part of the mitochondrial respiratory chain. The b-c1 complex mediates electron transfer from ubiquinol to cytochrome c. Contributes to the generation of a proton gradient across the mitochondrial membrane that is then used for ATP synthesis. This is Cytochrome b (MT-CYB) from Lepilemur ankaranensis (Ankarana sportive lemur).